The chain runs to 37 residues: Neuropeptide Y1-like conopeptide (37 aa).

Phe37 is modified (phenylalanine amide).

It belongs to the NPY family. Expressed by the venom duct.

Its subcellular location is the secreted. Functionally, causes hyperactivity such as jumping, rapid circling and tail flicking, when intraventricularly injected into mice brain. This chain is Neuropeptide Y1-like conopeptide, found in Conus betulinus (Beech cone).